A 219-amino-acid chain; its full sequence is uncharacterized protein (219 aa).

The protein belongs to the CIA30 family.

It is found in the cytoplasm. Its subcellular location is the nucleus. This is an uncharacterized protein from Schizosaccharomyces pombe (strain 972 / ATCC 24843) (Fission yeast).